The primary structure comprises 239 residues: Large ribosomal subunit protein uL1 (239 aa).

This sequence belongs to the universal ribosomal protein uL1 family. In terms of assembly, part of the 50S ribosomal subunit.

Binds directly to 23S rRNA. The L1 stalk is quite mobile in the ribosome, and is involved in E site tRNA release. Its function is as follows. Protein L1 is also a translational repressor protein, it controls the translation of the L11 operon by binding to its mRNA. In Rickettsia rickettsii (strain Iowa), this protein is Large ribosomal subunit protein uL1.